Reading from the N-terminus, the 290-residue chain is Iron-sulfur cluster carrier protein (290 aa).

Residue 47 to 54 (GKGGVGKS) coordinates ATP.

This sequence belongs to the Mrp/NBP35 ATP-binding proteins family. As to quaternary structure, homodimer.

In terms of biological role, binds and transfers iron-sulfur (Fe-S) clusters to target apoproteins. Can hydrolyze ATP. The sequence is that of Iron-sulfur cluster carrier protein from Methanocaldococcus jannaschii (strain ATCC 43067 / DSM 2661 / JAL-1 / JCM 10045 / NBRC 100440) (Methanococcus jannaschii).